We begin with the raw amino-acid sequence, 204 residues long: Small ribosomal subunit protein uS4 (204 aa).

Positions 92 to 153 (RRLDALVLRS…RSKEKTLFTI (62 aa)) constitute an S4 RNA-binding domain.

This sequence belongs to the universal ribosomal protein uS4 family. In terms of assembly, part of the 30S ribosomal subunit. Contacts protein S5. The interaction surface between S4 and S5 is involved in control of translational fidelity.

Functionally, one of the primary rRNA binding proteins, it binds directly to 16S rRNA where it nucleates assembly of the body of the 30S subunit. Its function is as follows. With S5 and S12 plays an important role in translational accuracy. This chain is Small ribosomal subunit protein uS4, found in Streptomyces coelicolor (strain ATCC BAA-471 / A3(2) / M145).